Consider the following 463-residue polypeptide: Glycine--tRNA ligase (463 aa).

Positions 100 and 175 each coordinate substrate. Residues arginine 207 to glutamate 209, phenylalanine 217 to phenylalanine 222, glutamate 291 to leucine 292, and glycine 335 to arginine 338 each bind ATP. Phenylalanine 222–glutamate 226 is a binding site for substrate. Position 331–335 (glutamate 331–glycine 335) interacts with substrate.

Belongs to the class-II aminoacyl-tRNA synthetase family. In terms of assembly, homodimer.

Its subcellular location is the cytoplasm. It catalyses the reaction tRNA(Gly) + glycine + ATP = glycyl-tRNA(Gly) + AMP + diphosphate. Its function is as follows. Catalyzes the attachment of glycine to tRNA(Gly). The polypeptide is Glycine--tRNA ligase (Clostridium tetani (strain Massachusetts / E88)).